Consider the following 192-residue polypeptide: Epididymal-specific lipocalin-12 (192 aa).

The signal sequence occupies residues 1–19 (MRLLCGLWLWLSLLKVLQA). Cys-88 and Cys-192 are disulfide-bonded.

Belongs to the calycin superfamily. Lipocalin family. As to quaternary structure, monomer.

Its subcellular location is the secreted. In terms of biological role, binds all-trans retinoic acid and may act as a retinoid carrier protein within the epididymis. May play a role in male fertility. The protein is Epididymal-specific lipocalin-12 (LCN12) of Homo sapiens (Human).